The primary structure comprises 268 residues: Holocytochrome c-type synthase (268 aa).

The span at 1–22 (MGLSPSAPAVAVQASNASASPP) shows a compositional bias: low complexity. A disordered region spans residues 1 to 25 (MGLSPSAPAVAVQASNASASPPSGC). Gly2 carries N-myristoyl glycine lipidation. HRM repeat units follow at residues 24 to 29 (GCPMHE) and 34 to 39 (GCPVNT).

Belongs to the cytochrome c-type heme lyase family.

The protein localises to the mitochondrion inner membrane. It is found in the membrane. The catalysed reaction is holo-[cytochrome c] = apo-[cytochrome c] + heme b. In terms of biological role, lyase that catalyzes the covalent linking of the heme group to the cytochrome C apoprotein to produce the mature functional cytochrome. In Homo sapiens (Human), this protein is Holocytochrome c-type synthase.